A 462-amino-acid chain; its full sequence is tRNA modification GTPase MnmE (462 aa).

The (6S)-5-formyl-5,6,7,8-tetrahydrofolate site is built by R23, E88, and R127. One can recognise a TrmE-type G domain in the interval 224-383 (GLATVIIGRP…LEKAIADLFF (160 aa)). Position 234 (N234) interacts with K(+). Residues 234-239 (NVGKSS), 253-259 (TDIPGTT), and 278-281 (DTAG) contribute to the GTP site. Mg(2+) is bound at residue S238. Positions 253, 255, and 258 each coordinate K(+). Residue T259 coordinates Mg(2+). K462 contacts (6S)-5-formyl-5,6,7,8-tetrahydrofolate.

It belongs to the TRAFAC class TrmE-Era-EngA-EngB-Septin-like GTPase superfamily. TrmE GTPase family. In terms of assembly, homodimer. Heterotetramer of two MnmE and two MnmG subunits. The cofactor is K(+).

It is found in the cytoplasm. Its function is as follows. Exhibits a very high intrinsic GTPase hydrolysis rate. Involved in the addition of a carboxymethylaminomethyl (cmnm) group at the wobble position (U34) of certain tRNAs, forming tRNA-cmnm(5)s(2)U34. This chain is tRNA modification GTPase MnmE, found in Geobacillus kaustophilus (strain HTA426).